The sequence spans 290 residues: TIMELESS-interacting protein (290 aa).

Residues 1 to 59 (MLEPQENGLTDLPDYEHIEDETFPPFPPPASPGREDGEGAEPEEESGRGAPVPVPPKRT) are disordered. Residues 67 to 143 (LNAERLISER…KEVQTCLKRI (77 aa)) are interaction with TIMELESS. Phosphoserine occurs at positions 194 and 222. Polar residues predominate over residues 221 to 242 (NSQSLGNDLSVNTPSTQTSEAG). The segment at 221–290 (NSQSLGNDLS…VEETQLDQSF (70 aa)) is disordered. T233 and T244 each carry phosphothreonine.

This sequence belongs to the CSM3 family. Interacts with TIMELESS (via N-terminus), which impairs TIMELESS self-association. Associates with the MCM2-7 complex. Interacts with RPA2, PRDX2.

Its subcellular location is the cytoplasm. The protein localises to the nucleus. Its function is as follows. Plays an important role in the control of DNA replication and the maintenance of replication fork stability. Important for cell survival after DNA damage or replication stress. May be specifically required for the ATR-CHEK1 pathway in the replication checkpoint induced by hydroxyurea or ultraviolet light. Forms a complex with TIMELESS and this complex regulates DNA replication processes under both normal and stress conditions, stabilizes replication forks and influences both CHEK1 phosphorylation and the intra-S phase checkpoint in response to genotoxic stress. This is TIMELESS-interacting protein (TIPIN) from Bos taurus (Bovine).